The chain runs to 251 residues: Ubiquinone/menaquinone biosynthesis C-methyltransferase UbiE (251 aa).

S-adenosyl-L-methionine contacts are provided by residues Thr-74, Asp-95, and 123–124 (NA).

The protein belongs to the class I-like SAM-binding methyltransferase superfamily. MenG/UbiE family.

It carries out the reaction a 2-demethylmenaquinol + S-adenosyl-L-methionine = a menaquinol + S-adenosyl-L-homocysteine + H(+). It catalyses the reaction a 2-methoxy-6-(all-trans-polyprenyl)benzene-1,4-diol + S-adenosyl-L-methionine = a 5-methoxy-2-methyl-3-(all-trans-polyprenyl)benzene-1,4-diol + S-adenosyl-L-homocysteine + H(+). It functions in the pathway quinol/quinone metabolism; menaquinone biosynthesis; menaquinol from 1,4-dihydroxy-2-naphthoate: step 2/2. Its pathway is cofactor biosynthesis; ubiquinone biosynthesis. Methyltransferase required for the conversion of demethylmenaquinol (DMKH2) to menaquinol (MKH2) and the conversion of 2-polyprenyl-6-methoxy-1,4-benzoquinol (DDMQH2) to 2-polyprenyl-3-methyl-6-methoxy-1,4-benzoquinol (DMQH2). This is Ubiquinone/menaquinone biosynthesis C-methyltransferase UbiE from Edwardsiella ictaluri (strain 93-146).